The primary structure comprises 389 residues: 11-beta-hydroxysteroid dehydrogenase-like 5 (389 aa).

A helical; Signal-anchor for type II membrane protein transmembrane segment spans residues 11–31; that stretch reads LVAPPATMVVMAFAWPLLSFI. NADP(+) is bound by residues 56–82 and aspartate 107; that span reads GASSAIGEQIAYEYAKRGANLVLVARR. Serine 186 contributes to the substrate binding site. Tyrosine 199 serves as the catalytic Proton acceptor. NADP(+) is bound by residues 199–203 and lysine 203; that span reads YSAAK. A disordered region spans residues 337-381; the sequence is LMLEGGPPRVPASPPRYTASPPHYTASPPRYPASPPRYPASPPRF. The span at 365–378 shows a compositional bias: pro residues; that stretch reads PRYPASPPRYPASP.

This sequence belongs to the short-chain dehydrogenases/reductases (SDR) family.

It localises to the membrane. The protein is 11-beta-hydroxysteroid dehydrogenase-like 5 (HSD5) of Arabidopsis thaliana (Mouse-ear cress).